Reading from the N-terminus, the 131-residue chain is Keratin, high-sulfur matrix protein, IIIA3 (131 aa).

Wool.

Functionally, the keratin products of mammalian epidermal derivatives such as wool and hair consist of microfibrils embedded in a rigid matrix of other proteins. The matrix proteins include the high-sulfur and high-tyrosine keratins, having molecular weights of 6-20 kDa, whereas the microfibrils contain the larger, low-sulfur keratins (40-56 kDa). This chain is Keratin, high-sulfur matrix protein, IIIA3, found in Ovis aries (Sheep).